A 296-amino-acid chain; its full sequence is N-acetylmuramic acid 6-phosphate etherase 2 (296 aa).

An SIS domain is found at 55–218; it reads IVANFKAGGR…STASMVGIGK (164 aa). Residue E83 is the Proton donor of the active site. E114 is a catalytic residue.

The protein belongs to the GCKR-like family. MurNAc-6-P etherase subfamily. Homodimer.

It catalyses the reaction N-acetyl-D-muramate 6-phosphate + H2O = N-acetyl-D-glucosamine 6-phosphate + (R)-lactate. The protein operates within amino-sugar metabolism; N-acetylmuramate degradation. Functionally, specifically catalyzes the cleavage of the D-lactyl ether substituent of MurNAc 6-phosphate, producing GlcNAc 6-phosphate and D-lactate. This chain is N-acetylmuramic acid 6-phosphate etherase 2, found in Lactiplantibacillus plantarum (strain ATCC BAA-793 / NCIMB 8826 / WCFS1) (Lactobacillus plantarum).